The following is a 130-amino-acid chain: Ribonuclease P protein component 2 (130 aa).

Belongs to the eukaryotic/archaeal RNase P protein component 2 family. In terms of assembly, consists of a catalytic RNA component and at least 5 protein subunits.

It is found in the cytoplasm. The enzyme catalyses Endonucleolytic cleavage of RNA, removing 5'-extranucleotides from tRNA precursor.. Functionally, part of ribonuclease P, a protein complex that generates mature tRNA molecules by cleaving their 5'-ends. In Methanococcus maripaludis (strain DSM 14266 / JCM 13030 / NBRC 101832 / S2 / LL), this protein is Ribonuclease P protein component 2.